Here is a 644-residue protein sequence, read N- to C-terminus: ATP-dependent zinc metalloprotease FtsH (644 aa).

The Cytoplasmic portion of the chain corresponds to 1 to 4; that stretch reads MAKN. The chain crosses the membrane as a helical span at residues 5–25; that stretch reads LILWLVIAVVLMSVFQSFGPS. Residues 26–98 lie on the Periplasmic side of the membrane; sequence ESNGRKVDYS…VGEPPEEPSL (73 aa). Residues 99–119 traverse the membrane as a helical segment; sequence LASIFISWFPMLLLIGVWIFF. Topologically, residues 120–644 are cytoplasmic; that stretch reads MRQMQGGGGK…NTMSEQLGDK (525 aa). Position 192–199 (192–199) interacts with ATP; sequence GPPGTGKT. Histidine 414 provides a ligand contact to Zn(2+). Residue glutamate 415 is part of the active site. Histidine 418 and aspartate 492 together coordinate Zn(2+). Residues 598–644 are disordered; that stretch reads VRPPAGWEEPGASNNAGDNGSPKAPRPVDEPRTPNPGNTMSEQLGDK. Over residues 632–644 the composition is skewed to polar residues; that stretch reads NPGNTMSEQLGDK.

The protein in the central section; belongs to the AAA ATPase family. In the C-terminal section; belongs to the peptidase M41 family. In terms of assembly, homohexamer. Zn(2+) is required as a cofactor.

It localises to the cell inner membrane. Functionally, acts as a processive, ATP-dependent zinc metallopeptidase for both cytoplasmic and membrane proteins. Plays a role in the quality control of integral membrane proteins. This chain is ATP-dependent zinc metalloprotease FtsH, found in Escherichia coli O157:H7.